Here is a 144-residue protein sequence, read N- to C-terminus: Macromomycin (144 aa).

Positions 1–32 are cleaved as a signal peptide; the sequence is MLQNTSRFLARAGATVGVAAGLAFSLPADRDG. 2 disulfide bridges follow: cysteine 68–cysteine 78 and cysteine 120–cysteine 125.

This sequence belongs to the neocarzinostatin family.

Binds non-covalently to a chromophore which is the cytotoxic and mutagenic component of the antibiotic. The chromophore binds to DNA as a weak intercalator and causes single- and double-strand breaks. In Streptomyces macromomyceticus, this protein is Macromomycin.